A 541-amino-acid chain; its full sequence is Arginine--tRNA ligase (541 aa).

The short motif at 119 to 129 (ANPTGPLHIGH) is the 'HIGH' region element.

Belongs to the class-I aminoacyl-tRNA synthetase family. As to quaternary structure, monomer.

Its subcellular location is the cytoplasm. The enzyme catalyses tRNA(Arg) + L-arginine + ATP = L-arginyl-tRNA(Arg) + AMP + diphosphate. This chain is Arginine--tRNA ligase (argS), found in Helicobacter pylori (strain ATCC 700392 / 26695) (Campylobacter pylori).